The following is a 434-amino-acid chain: Adenylosuccinate synthetase (434 aa).

GTP-binding positions include 13–19 and 41–43; these read GDEGKGK and GHT. D14 functions as the Proton acceptor in the catalytic mechanism. Positions 14 and 41 each coordinate Mg(2+). IMP contacts are provided by residues 14-17, 39-42, T133, R147, Q228, T243, and R307; these read DEGK and NAGH. The active-site Proton donor is H42. A substrate-binding site is contributed by 303–309; sequence STTGRKR. GTP is bound by residues R309, 335–337, and 417–419; these read KID and STG.

It belongs to the adenylosuccinate synthetase family. Homodimer. Requires Mg(2+) as cofactor.

The protein resides in the cytoplasm. It catalyses the reaction IMP + L-aspartate + GTP = N(6)-(1,2-dicarboxyethyl)-AMP + GDP + phosphate + 2 H(+). Its pathway is purine metabolism; AMP biosynthesis via de novo pathway; AMP from IMP: step 1/2. In terms of biological role, plays an important role in the de novo pathway of purine nucleotide biosynthesis. Catalyzes the first committed step in the biosynthesis of AMP from IMP. In Wigglesworthia glossinidia brevipalpis, this protein is Adenylosuccinate synthetase.